The sequence spans 175 residues: Gamma-crystallin M1 (175 aa).

Beta/gamma crystallin 'Greek key' domains follow at residues 2 to 40 (GKII…RVES), 41 to 86 (GCFM…RYPY), 89 to 121 (FRMR…RMSD), and 130 to 172 (GHWL…RRIT).

This sequence belongs to the beta/gamma-crystallin family. Monomer.

In terms of biological role, crystallins are the dominant structural components of the vertebrate eye lens. The chain is Gamma-crystallin M1 (GM1) from Chiloscyllium indicum (Slender bamboo shark).